Reading from the N-terminus, the 191-residue chain is uncharacterized protein (191 aa).

This is an uncharacterized protein from Acanthamoeba polyphaga (Amoeba).